Consider the following 365-residue polypeptide: Putative outer membrane porin protein NmpC (365 aa).

The signal sequence occupies residues 1-23; the sequence is MKKLTVAISAVAASVLMAMSAQA.

The protein belongs to the Gram-negative porin family. As to quaternary structure, homotrimer.

It is found in the cell outer membrane. The sequence is that of Putative outer membrane porin protein NmpC (nmpC) from Escherichia coli (strain K12).